Here is a 248-residue protein sequence, read N- to C-terminus: Ubiquinone biosynthesis O-methyltransferase (248 aa).

Residues Arg41, Gly72, Asp93, and Met136 each contribute to the S-adenosyl-L-methionine site.

Belongs to the methyltransferase superfamily. UbiG/COQ3 family.

The catalysed reaction is a 3-demethylubiquinol + S-adenosyl-L-methionine = a ubiquinol + S-adenosyl-L-homocysteine + H(+). The enzyme catalyses a 3-(all-trans-polyprenyl)benzene-1,2-diol + S-adenosyl-L-methionine = a 2-methoxy-6-(all-trans-polyprenyl)phenol + S-adenosyl-L-homocysteine + H(+). Its pathway is cofactor biosynthesis; ubiquinone biosynthesis. Functionally, O-methyltransferase that catalyzes the 2 O-methylation steps in the ubiquinone biosynthetic pathway. This is Ubiquinone biosynthesis O-methyltransferase from Rhizobium johnstonii (strain DSM 114642 / LMG 32736 / 3841) (Rhizobium leguminosarum bv. viciae).